The primary structure comprises 597 residues: Probable E3 ubiquitin-protein ligase ARI1 (597 aa).

Residues 119-333 form a TRIAD supradomain region; that stretch reads SQMSCDVCME…IAGHSCGRYQ (215 aa). Residues C123, C126, C140, H142, C145, C148, C167, C172, C214, C220, C236, C238, C243, C246, H251, C256, C283, and C286 each contribute to the Zn(2+) site. An RING-type 1 zinc finger spans residues 123 to 172; it reads CDVCMEDLPGDHMTRMDCGHCFCNNCWTEHFTVQINEGQSKRIRCMAHQC. The segment at 194–256 adopts an IBR-type zinc-finger fold; sequence AKFDRYLLES…LCQAHSPCSC (63 aa). The RING-type 2; atypical zinc finger occupies 283–311; it reads CPKCYKPVEKNGGCNLVRCICGQCFCWLC. The active site involves C296. Positions 301, 303, 308, 311, 319, and 329 each coordinate Zn(2+). Positions 536–575 are disordered; sequence FQPLDSGTSGVTSRPEQASGSRSSEDTICSSSQKRPKKEG. The span at 540-568 shows a compositional bias: polar residues; it reads DSGTSGVTSRPEQASGSRSSEDTICSSSQ.

Belongs to the RBR family. Ariadne subfamily. It depends on Zn(2+) as a cofactor. In terms of tissue distribution, ubiquitous.

The catalysed reaction is [E2 ubiquitin-conjugating enzyme]-S-ubiquitinyl-L-cysteine + [acceptor protein]-L-lysine = [E2 ubiquitin-conjugating enzyme]-L-cysteine + [acceptor protein]-N(6)-ubiquitinyl-L-lysine.. The protein operates within protein modification; protein ubiquitination. Might act as an E3 ubiquitin-protein ligase, or as part of E3 complex, which accepts ubiquitin from specific E2 ubiquitin-conjugating enzymes and then transfers it to substrates. In Arabidopsis thaliana (Mouse-ear cress), this protein is Probable E3 ubiquitin-protein ligase ARI1 (ARI1).